Consider the following 149-residue polypeptide: Arginine repressor (149 aa).

Belongs to the ArgR family.

The protein localises to the cytoplasm. It functions in the pathway amino-acid biosynthesis; L-arginine biosynthesis [regulation]. In terms of biological role, regulates arginine biosynthesis genes. In Bacillus cereus (strain ATCC 10987 / NRS 248), this protein is Arginine repressor.